Here is a 329-residue protein sequence, read N- to C-terminus: Thiamine thiazole synthase (329 aa).

Substrate is bound by residues Cys-86, 107 to 108 (EA), Gly-115, and Val-180. Cys-218 carries the post-translational modification 2,3-didehydroalanine (Cys). Substrate-binding positions include Asp-220, His-235, Met-287, and 297 to 299 (RMG).

This sequence belongs to the THI4 family. As to quaternary structure, homooctamer. The cofactor is Fe cation. Post-translationally, during the catalytic reaction, a sulfide is transferred from Cys-218 to a reaction intermediate, generating a dehydroalanine residue.

It localises to the cytoplasm. Its subcellular location is the nucleus. The enzyme catalyses [ADP-thiazole synthase]-L-cysteine + glycine + NAD(+) = [ADP-thiazole synthase]-dehydroalanine + ADP-5-ethyl-4-methylthiazole-2-carboxylate + nicotinamide + 3 H2O + 2 H(+). Its function is as follows. Involved in biosynthesis of the thiamine precursor thiazole. Catalyzes the conversion of NAD and glycine to adenosine diphosphate 5-(2-hydroxyethyl)-4-methylthiazole-2-carboxylic acid (ADT), an adenylated thiazole intermediate. The reaction includes an iron-dependent sulfide transfer from a conserved cysteine residue of the protein to a thiazole intermediate. The enzyme can only undergo a single turnover, which suggests it is a suicide enzyme. May have additional roles in adaptation to various stress conditions and in DNA damage tolerance. In Phaeosphaeria nodorum (strain SN15 / ATCC MYA-4574 / FGSC 10173) (Glume blotch fungus), this protein is Thiamine thiazole synthase.